Reading from the N-terminus, the 234-residue chain is MNLRAIAVTFATFAGANAAVIDHDQVIPFAQPMPNTTLQSVAIQFKPQIYINNGCHPYPAVDADGNTSGGLKPTGSQSAGCKGSGYGSQIYGRAVEYEGVYAFMYSWYMPKDETLDGQGHRHDWENCVVWLDSLDRPSIVALSASYHSTYNYYYPPSSSYLDGNSAKIQYSTSWIVLDHSLSATSTAGEIQDLIMWDQLTDAARTALEDTDFGSANVPFKEDNFIAKLAKAYYV.

The N-terminal stretch at 1–18 (MNLRAIAVTFATFAGANA) is a signal peptide. N-linked (GlcNAc...) asparagine glycans are attached at residues Asn-35 and Asn-66. Residues 119-125 (GHRHDWE) carry the Hepta-peptide GHRHDWE motif motif.

It belongs to the Necrosis inducing protein (NPP1) family.

It localises to the secreted. Functionally, secreted effector that contributes strongly to virulence during infection by P.capsici. This chain is NLP effector protein Pc576423, found in Phytophthora capsici.